An 831-amino-acid polypeptide reads, in one-letter code: Prolactin receptor (831 aa).

The first 23 residues, 1 to 23, serve as a signal peptide directing secretion; the sequence is MKQDLISSVQIILFLPLTTVGLA. Over 24–438 the chain is Extracellular; sequence GQSFPGKPKI…QIPNDFRVKD (415 aa). Fibronectin type-III domains are found at residues 30-128, 129-227, 230-331, and 332-433; these read KPKI…VQPG, SPVN…IPSG, PPEK…VQPD, and PPVN…IPND. Cysteine 36 and cysteine 46 form a disulfide bridge. An N-linked (GlcNAc...) asparagine glycan is attached at asparagine 59. Cysteine 75 and cysteine 86 form a disulfide bridge. Asparagine 91, asparagine 100, asparagine 112, asparagine 132, asparagine 262, asparagine 303, asparagine 315, and asparagine 335 each carry an N-linked (GlcNAc...) asparagine glycan. Zn(2+) contacts are provided by aspartate 414 and histidine 416. Positions 419-423 match the WSXWS motif motif; it reads WSEWS. A helical transmembrane segment spans residues 439–459; that stretch reads MIVWIVLGVLSSLICLIMSWT. Residues 460–831 lie on the Cytoplasmic side of the membrane; the sequence is MVLKGYRMIT…DPSSFMPSFK (372 aa). The Box 1 motif motif lies at 471-479; it reads MLPPVPGPK. 3 disordered regions span residues 527–563, 774–796, and 808–831; these read QQLMPSHDNGHPSKNAKITRKETDSDSGRGSCDSPSL, RVPHTPASQEPAKETSQSLQQGQ, and PSDCKRETGGSEYMDPSSFMPSFK. Residues 787 to 796 show a composition bias toward polar residues; sequence ETSQSLQQGQ.

Belongs to the type I cytokine receptor family. Type 1 subfamily.

It is found in the membrane. Its function is as follows. This is a receptor for the anterior pituitary hormone prolactin. This Gallus gallus (Chicken) protein is Prolactin receptor (PRLR).